An 887-amino-acid chain; its full sequence is Probable LRR receptor-like serine/threonine-protein kinase At5g59680 (887 aa).

A signal peptide spans 1 to 23 (MERSLELLLLLIRTLAIIHISQA). Residues 25–510 (SQQGFISLDC…TKSGKSFPVT (486 aa)) are Extracellular-facing. Residues Asn143, Asn230, Asn256, Asn289, Asn338, Asn363, Asn400, Asn416, Asn432, Asn445, Asn464, and Asn471 are each glycosylated (N-linked (GlcNAc...) asparagine). LRR repeat units lie at residues 411–434 (RITTLNLSSSGLTGTITAAIQNLT), 435–457 (TLEKLDLSNNNLTGEVPEFLSNM), and 459–481 (SLLVINLSGNDLNGTIPQSLQRK). Residues 511-531 (IVASVGSAAILIVVLVLVLFL) form a helical membrane-spanning segment. Residues 532 to 887 (RKKKPSAVEV…FDAEMIPRAR (356 aa)) lie on the Cytoplasmic side of the membrane. Phosphothreonine is present on Thr571. Residues 580–853 (NNFGRVVGEG…HVVIELKECL (274 aa)) form the Protein kinase domain. Residues 586–594 (VGEGGFGVV) and Lys608 each bind ATP. A Phosphotyrosine modification is found at Tyr653. The Proton acceptor role is filled by Asp705. Residue Ser739 is modified to Phosphoserine. 2 positions are modified to phosphothreonine: Thr740 and Thr745. Residue Tyr753 is modified to Phosphotyrosine.

The protein belongs to the protein kinase superfamily. Ser/Thr protein kinase family.

Its subcellular location is the membrane. The catalysed reaction is L-seryl-[protein] + ATP = O-phospho-L-seryl-[protein] + ADP + H(+). It catalyses the reaction L-threonyl-[protein] + ATP = O-phospho-L-threonyl-[protein] + ADP + H(+). In Arabidopsis thaliana (Mouse-ear cress), this protein is Probable LRR receptor-like serine/threonine-protein kinase At5g59680.